A 387-amino-acid polypeptide reads, in one-letter code: Anhydro-N-acetylmuramic acid kinase (387 aa).

An ATP-binding site is contributed by 9 to 16 (GTSADGVD).

This sequence belongs to the anhydro-N-acetylmuramic acid kinase family.

It catalyses the reaction 1,6-anhydro-N-acetyl-beta-muramate + ATP + H2O = N-acetyl-D-muramate 6-phosphate + ADP + H(+). It functions in the pathway amino-sugar metabolism; 1,6-anhydro-N-acetylmuramate degradation. The protein operates within cell wall biogenesis; peptidoglycan recycling. Its function is as follows. Catalyzes the specific phosphorylation of 1,6-anhydro-N-acetylmuramic acid (anhMurNAc) with the simultaneous cleavage of the 1,6-anhydro ring, generating MurNAc-6-P. Is required for the utilization of anhMurNAc either imported from the medium or derived from its own cell wall murein, and thus plays a role in cell wall recycling. In Synechococcus sp. (strain WH7803), this protein is Anhydro-N-acetylmuramic acid kinase.